Consider the following 338-residue polypeptide: Heat-inducible transcription repressor HrcA (338 aa).

This sequence belongs to the HrcA family.

Negative regulator of class I heat shock genes (grpE-dnaK-dnaJ and groELS operons). Prevents heat-shock induction of these operons. The sequence is that of Heat-inducible transcription repressor HrcA from Streptomyces avermitilis (strain ATCC 31267 / DSM 46492 / JCM 5070 / NBRC 14893 / NCIMB 12804 / NRRL 8165 / MA-4680).